Reading from the N-terminus, the 183-residue chain is Ribosome rescue factor SmrB (183 aa).

Positions 98-173 constitute a Smr domain; the sequence is LDLHGLTQLQ…GDAALLVLIE (76 aa).

The protein belongs to the SmrB family. In terms of assembly, associates with collided ribosomes, but not with correctly translating polysomes.

Acts as a ribosome collision sensor. Detects stalled/collided disomes (pairs of ribosomes where the leading ribosome is stalled and a second ribosome has collided with it) and endonucleolytically cleaves mRNA at the 5' boundary of the stalled ribosome. Stalled/collided disomes form a new interface (primarily via the 30S subunits) that binds SmrB. Cleaved mRNA becomes available for tmRNA ligation, leading to ribosomal subunit dissociation and rescue of stalled ribosomes. The protein is Ribosome rescue factor SmrB of Shigella sonnei (strain Ss046).